The following is a 671-amino-acid chain: TBC1 domain family member 15 (671 aa).

A2 bears the N-acetylalanine mark. 5 positions are modified to phosphoserine: S23, S32, S70, S205, and S257. The 211-residue stretch at 329 to 539 (GLSHSLRKQA…RLWEVMWTEL (211 aa)) folds into the Rab-GAP TBC domain. 2 positions are modified to phosphoserine: S623 and S655. Residues 650 to 671 (EAKDDSPTQTLASPNACRLTPA) are disordered. T669 carries the phosphothreonine modification.

Interacts with non-phosphorylated form of RAB8A; phosphorylation of RAB8A at 'Thr-72' disrupts this interaction. Interacts with ARMC12. In terms of tissue distribution, ubiquitous, with highest expression in heart, liver and testis and lower expression in brain, spleen, lung, kidney and skeletal muscle.

The protein resides in the cytoplasm. Acts as a GTPase activating protein for RAB7A. Does not act on RAB4, RAB5 or RAB6. This is TBC1 domain family member 15 (Tbc1d15) from Mus musculus (Mouse).